The primary structure comprises 147 residues: Hemoglobin subunit beta-1/2 (147 aa).

Position 2 is an N-acetylvaline (Val2). The 145-residue stretch at 3-147 folds into the Globin domain; the sequence is HLSSEEKSAV…VANALAHKYH (145 aa). Residue Thr13 is modified to Phosphothreonine. The residue at position 45 (Ser45) is a Phosphoserine. An N6-acetyllysine modification is found at Lys60. A heme b-binding site is contributed by His64. Lys83 carries the N6-acetyllysine modification. His93 is a binding site for heme b. Cys94 carries the post-translational modification S-nitrosocysteine. Position 145 is an N6-acetyllysine (Lys145).

Belongs to the globin family. Heterotetramer of two alpha chains and two beta chains. In terms of tissue distribution, red blood cells.

Functionally, involved in oxygen transport from the lung to the various peripheral tissues. This chain is Hemoglobin subunit beta-1/2 (HBB1), found in Oryctolagus cuniculus (Rabbit).